The sequence spans 388 residues: MNLHEYQAKSLFAEYGLPVSEGFACDTAQEAVEAAGRIGGNLWVVKCQVHAGGRGKAGGVKVTGDKEEIRAFAEYWLGKNLVTYQTDEKGQPVAKILVESCTDIANELYLGAVVDRATRRVVFMASTEGGVEIEKVAEETPELIHKAIIDPLTGPQPFQARDLGFKLGLNPTQMKQFTKIFMGLATMFVDHDFALLEINPLVITTEGNLHCLDGKIGIDGNALFRQPKIKAMHDPSQDDAREAHAAMFELNYVALDGNVGCMVNGAGLAMGTMDIVNLHGGKPANFLDVGGGATKERVAEAFKIILSDSNVKAVLVNIFGGIVRCDMIAEGIIGAVKEVGVKVPVVVRLEGTNAELGREVLAKSGLDIIAANSLTDAAELVVKAAEGK.

The region spanning 9–244 is the ATP-grasp domain; the sequence is KSLFAEYGLP…PSQDDAREAH (236 aa). ATP contacts are provided by residues lysine 46, 53–55, glutamate 99, threonine 102, and glutamate 107; that span reads GRG. Asparagine 199 and aspartate 213 together coordinate Mg(2+). Substrate contacts are provided by residues asparagine 264 and 321 to 323; that span reads GIV.

It belongs to the succinate/malate CoA ligase beta subunit family. As to quaternary structure, heterotetramer of two alpha and two beta subunits. Mg(2+) is required as a cofactor.

The enzyme catalyses succinate + ATP + CoA = succinyl-CoA + ADP + phosphate. It catalyses the reaction GTP + succinate + CoA = succinyl-CoA + GDP + phosphate. It functions in the pathway carbohydrate metabolism; tricarboxylic acid cycle; succinate from succinyl-CoA (ligase route): step 1/1. Succinyl-CoA synthetase functions in the citric acid cycle (TCA), coupling the hydrolysis of succinyl-CoA to the synthesis of either ATP or GTP and thus represents the only step of substrate-level phosphorylation in the TCA. The beta subunit provides nucleotide specificity of the enzyme and binds the substrate succinate, while the binding sites for coenzyme A and phosphate are found in the alpha subunit. The sequence is that of Succinate--CoA ligase [ADP-forming] subunit beta from Shewanella oneidensis (strain ATCC 700550 / JCM 31522 / CIP 106686 / LMG 19005 / NCIMB 14063 / MR-1).